A 182-amino-acid polypeptide reads, in one-letter code: Isopentenyl-diphosphate Delta-isomerase (182 aa).

Residues His-25 and His-32 each contribute to the Mn(2+) site. A Nudix hydrolase domain is found at 30-164 (LLHLAFSSWL…PWAFSPWMVM (135 aa)). Residue Cys-67 is part of the active site. Mn(2+) is bound at residue His-69. Glu-87 serves as a coordination point for Mg(2+). The Mn(2+) site is built by Glu-114 and Glu-116. The active site involves Glu-116.

The protein belongs to the IPP isomerase type 1 family. In terms of assembly, homodimer. It depends on Mg(2+) as a cofactor. Mn(2+) serves as cofactor.

It is found in the cytoplasm. It carries out the reaction isopentenyl diphosphate = dimethylallyl diphosphate. Its pathway is isoprenoid biosynthesis; dimethylallyl diphosphate biosynthesis; dimethylallyl diphosphate from isopentenyl diphosphate: step 1/1. Catalyzes the 1,3-allylic rearrangement of the homoallylic substrate isopentenyl (IPP) to its highly electrophilic allylic isomer, dimethylallyl diphosphate (DMAPP). The polypeptide is Isopentenyl-diphosphate Delta-isomerase (Escherichia coli O45:K1 (strain S88 / ExPEC)).